A 594-amino-acid chain; its full sequence is 4-alpha-glucanotransferase DPE1, chloroplastic/amyloplastic (594 aa).

A chloroplast-targeting transit peptide spans 1–37 (MATLSLPLPHLTQAIPARARPRPRPLRGIPARLLSCR).

It belongs to the disproportionating enzyme family.

Its subcellular location is the plastid. The protein localises to the chloroplast. It is found in the amyloplast. It carries out the reaction Transfers a segment of a (1-&gt;4)-alpha-D-glucan to a new position in an acceptor, which may be glucose or a (1-&gt;4)-alpha-D-glucan.. In terms of biological role, chloroplastic alpha-glucanotransferase involved in maltotriose metabolism. The polypeptide is 4-alpha-glucanotransferase DPE1, chloroplastic/amyloplastic (DPE1) (Oryza sativa subsp. japonica (Rice)).